Reading from the N-terminus, the 431-residue chain is Glutamate-1-semialdehyde 2,1-aminomutase 2 (431 aa).

An N6-(pyridoxal phosphate)lysine modification is found at K268.

It belongs to the class-III pyridoxal-phosphate-dependent aminotransferase family. HemL subfamily. As to quaternary structure, homodimer. Pyridoxal 5'-phosphate serves as cofactor.

Its subcellular location is the cytoplasm. It catalyses the reaction (S)-4-amino-5-oxopentanoate = 5-aminolevulinate. The protein operates within porphyrin-containing compound metabolism; protoporphyrin-IX biosynthesis; 5-aminolevulinate from L-glutamyl-tRNA(Glu): step 2/2. The protein is Glutamate-1-semialdehyde 2,1-aminomutase 2 of Bacillus licheniformis (strain ATCC 14580 / DSM 13 / JCM 2505 / CCUG 7422 / NBRC 12200 / NCIMB 9375 / NCTC 10341 / NRRL NRS-1264 / Gibson 46).